We begin with the raw amino-acid sequence, 232 residues long: Adenosylcobinamide-GDP ribazoletransferase (232 aa).

A run of 7 helical transmembrane segments spans residues 24–44, 46–66, 96–116, 117–137, 153–173, 174–194, and 210–230; these read LWAF…ILYL, IPLA…LLHL, IAGV…LSML, PFYA…LGLA, GMNG…YLPV, VIYD…WYVI, and GAMA…SLCF.

Belongs to the CobS family. The cofactor is Mg(2+).

It is found in the cell membrane. It carries out the reaction alpha-ribazole + adenosylcob(III)inamide-GDP = adenosylcob(III)alamin + GMP + H(+). The enzyme catalyses alpha-ribazole 5'-phosphate + adenosylcob(III)inamide-GDP = adenosylcob(III)alamin 5'-phosphate + GMP + H(+). The protein operates within cofactor biosynthesis; adenosylcobalamin biosynthesis; adenosylcobalamin from cob(II)yrinate a,c-diamide: step 7/7. Its function is as follows. Joins adenosylcobinamide-GDP and alpha-ribazole to generate adenosylcobalamin (Ado-cobalamin). Also synthesizes adenosylcobalamin 5'-phosphate from adenosylcobinamide-GDP and alpha-ribazole 5'-phosphate. The chain is Adenosylcobinamide-GDP ribazoletransferase from Pyrococcus abyssi (strain GE5 / Orsay).